The chain runs to 592 residues: Protein US23 (592 aa).

The tract at residues 407–491 (PRSLGDGEEE…NNVVPNVDRR (85 aa)) is disordered. Residues 460–481 (ADDEEQGEDDDDSGAEPMEPEE) are compositionally biased toward acidic residues.

This sequence belongs to the herpesviridae US22 family.

It is found in the virion tegument. The chain is Protein US23 (US23) from Homo sapiens (Human).